Reading from the N-terminus, the 364-residue chain is Peptide chain release factor 1 (364 aa).

Gln237 carries the post-translational modification N5-methylglutamine.

Belongs to the prokaryotic/mitochondrial release factor family. In terms of processing, methylated by PrmC. Methylation increases the termination efficiency of RF1.

Its subcellular location is the cytoplasm. Its function is as follows. Peptide chain release factor 1 directs the termination of translation in response to the peptide chain termination codons UAG and UAA. In Rubrobacter xylanophilus (strain DSM 9941 / JCM 11954 / NBRC 16129 / PRD-1), this protein is Peptide chain release factor 1.